A 216-amino-acid chain; its full sequence is Nucleoid occlusion factor SlmA (216 aa).

The interval 1 to 23 (MAEQLTLDSIEPEPEKQSAKIEK) is disordered. Positions 13–23 (EPEKQSAKIEK) are enriched in basic and acidic residues. Residues 28-88 (ERRQQVLTVL…ALIENIESSL (61 aa)) enclose the HTH tetR-type domain. The H-T-H motif DNA-binding region spans 51 to 70 (TTARLAKEVGVSEAALYRYF).

Belongs to the nucleoid occlusion factor SlmA family. As to quaternary structure, homodimer. Interacts with FtsZ.

Its subcellular location is the cytoplasm. It localises to the nucleoid. In terms of biological role, required for nucleoid occlusion (NO) phenomenon, which prevents Z-ring formation and cell division over the nucleoid. Acts as a DNA-associated cell division inhibitor that binds simultaneously chromosomal DNA and FtsZ, and disrupts the assembly of FtsZ polymers. SlmA-DNA-binding sequences (SBS) are dispersed on non-Ter regions of the chromosome, preventing FtsZ polymerization at these regions. This chain is Nucleoid occlusion factor SlmA, found in Mannheimia succiniciproducens (strain KCTC 0769BP / MBEL55E).